Consider the following 321-residue polypeptide: MLNNEYKNSSMKIFSLKGNEPLAQEVADHVGIELGKCSVKRFSDGEIQINIEESIRGCDVFIVQPTSYPVNLHLMELLIMIDACKRASAANINIVVPYYGYARQDRKARSREPITAKLVANLIETAGANRMIALDLHAPQIQGFFDIPIDHLMGVPILAQHFENDPDINPEECVVVSPDHGGVTRARKLADILKTPIAIIDKRRPKPNVAEVMNIVGDIEGRTAIIIDDIIDTAGTITLAAQALKDKGAKEVYACCTHPVLSGPAKERIENSAIKQLIVTNSIQLEENRKPNNTKELSVAGLIAKAIIRVYERESVSVLFD.

Residues 44 to 46 and 103 to 104 each bind ATP; these read DGE and RQ. His-137 and Asp-179 together coordinate Mg(2+). Residue Lys-202 is part of the active site. D-ribose 5-phosphate is bound by residues Arg-204, Asp-228, and 232 to 236; that span reads DTAGT.

It belongs to the ribose-phosphate pyrophosphokinase family. Class I subfamily. As to quaternary structure, homohexamer. It depends on Mg(2+) as a cofactor.

It is found in the cytoplasm. It carries out the reaction D-ribose 5-phosphate + ATP = 5-phospho-alpha-D-ribose 1-diphosphate + AMP + H(+). It participates in metabolic intermediate biosynthesis; 5-phospho-alpha-D-ribose 1-diphosphate biosynthesis; 5-phospho-alpha-D-ribose 1-diphosphate from D-ribose 5-phosphate (route I): step 1/1. In terms of biological role, involved in the biosynthesis of the central metabolite phospho-alpha-D-ribosyl-1-pyrophosphate (PRPP) via the transfer of pyrophosphoryl group from ATP to 1-hydroxyl of ribose-5-phosphate (Rib-5-P). The sequence is that of Ribose-phosphate pyrophosphokinase from Staphylococcus epidermidis (strain ATCC 35984 / DSM 28319 / BCRC 17069 / CCUG 31568 / BM 3577 / RP62A).